The chain runs to 613 residues: Secretogranin-2 (613 aa).

The N-terminal stretch at 1–27 (MAEAKTHWLGAVLSLIPLIFLLSEAEA) is a signal peptide. A propeptide spanning residues 28–30 (ASF) is cleaved from the precursor. Disordered stretches follow at residues 67-105 (QQAH…DSLS) and 119-146 (QAEN…PMDM). Basic and acidic residues predominate over residues 92–105 (ENGDLPESSRDSLS). Y150 is subject to Sulfotyrosine. Residues S173, S267, S428, S528, S551, and S552 each carry the phosphoserine modification. Basic and acidic residues predominate over residues 257 to 283 (ESQTQEEVRDSKENADKTEQINDEMKR). A disordered region spans residues 257–287 (ESQTQEEVRDSKENADKTEQINDEMKRSGQL). A compositionally biased stretch (basic and acidic residues) spans 546–557 (HLSQHSSQETDK). Residues 546-580 (HLSQHSSQETDKLASVSKRLPVGTPKSDDTPNRPY) form a disordered region.

Belongs to the chromogranin/secretogranin protein family. As to quaternary structure, interacts with Secretogranin III/SCG3. In terms of tissue distribution, highest levels detected in anterior pituitary followed by adrenal medulla and posterior pituitary (at protein level). In the brain, high levels are found in the hypothalamus, comparable to those present in posterior pituitary with two- to six-fold lower levels present in the other brain regions investigated including caudate nucleus, hippocampus, thalamus and brainstem (at protein level).

The protein resides in the secreted. In terms of biological role, neuroendocrine protein of the granin family that regulates the biogenesis of secretory granules. The polypeptide is Secretogranin-2 (SCG2) (Bos taurus (Bovine)).